The sequence spans 643 residues: Very long-chain fatty acid transport protein (643 aa).

The Cytoplasmic portion of the chain corresponds to 1–15 (MACMHQAQLYNDLEE). The chain crosses the membrane as a helical span at residues 16 to 36 (LLTGPSVPIVAGAAGAAALTA). The Extracellular segment spans residues 37-138 (YINAKYHIAH…AIDGGNSAEH (102 aa)). A helical membrane pass occupies residues 139-159 (LMLWLALDAIGAATSFLNWNL). Topologically, residues 160 to 249 (TGAGLIHCIK…TGLPKGVFIS (90 aa)) are cytoplasmic. 235-246 (YTSGTTGLPKGV) contributes to the ATP binding site. An intramembrane segment occupies 250-318 (TGRELRTDWS…FWPEVVASEA (69 aa)). The Cytoplasmic portion of the chain corresponds to 319–643 (NIIQYVGELG…QGIVDKRIRL (325 aa)). Residues 477–525 (DLWFKSGDMLRQDAEGRVYFVDRLGDTFRWKSENVSTNEVADVMGTFPQ) carry the FACS motif.

It belongs to the ATP-dependent AMP-binding enzyme family.

The protein resides in the lipid droplet. It localises to the cell membrane. It is found in the peroxisome membrane. Its subcellular location is the peroxisome. It catalyses the reaction a very long-chain fatty acid + ATP + CoA = a very long-chain fatty acyl-CoA + AMP + diphosphate. Acyl-CoA synthetase required for both the import of long chain fatty acids (LCFAs) (C14-C18) and the activation very long chain fatty acids (VLCFAs) (C20-C26) by esterification of the fatty acids into metabolically active CoA-thioesters for subsequent degradation or incorporation into phospholipids. The transport and fatty acyl-CoA synthetase activities are genetically separable and are thus independent activities. Esterifies VLCFAs in the peroxisome matrix. The VLCFAs are actively transported into peroxisomes by a PXA1-PXA2 heterodimeric transporter in the peroxisomal membrane. In Cochliobolus heterostrophus (Southern corn leaf blight fungus), this protein is Very long-chain fatty acid transport protein (FAT1).